A 679-amino-acid chain; its full sequence is MNGRKLPDGGVLYDDTDESEDEIEVEGDVSAAPLAVAVDWNAGSLNETGLVGAELIGEFVKRLPNSPGVYRMLNAEGDVLYVGKARSLKKRVGNYAVGRVHSNRIAQMVRQTANMEFVTTRTETEALLLEANLIKRLRPRFNVLLRDDKSFPYILITGDHRAPAIFKHRGARARKGDYFGPFASAGAVGRTINSLQRAFLIRTCTDSVFETRTRPCLLYQIKRCSGPCTHEVSDEGYAELVQEAKDFLSGKSQKVKSHMAEAMNQAAEDLDFERAAIYRDRLAALSHVQSHQGINPAGVDEADVFAIHHEGGVSCIQVFFFRTGQNWGNRAYFPKADPQLSSAEVLNAFLAQFYDDKPVPKQIMLSETAEELELLAAALSEKAGHKVSILVPRRGEKRDLVDHVVGNAREAHGRKLAETASQSRLLEGFKETFGLAYAPQRIEIYDNSHIMGTNAVGGMVVAGPEGFVKNQYRKFNIKSTDITPGDDFGMMKEVMTRRFSRLIKEEGIPDRTAQAAAADAADMPFPAWPDVILIDGGQGQMTAVRAILAELGITDSVTAIGIAKGVDRDAGRERFFAPGRESFTLPPRDPVLYFIQRMRDEAHRFAIGSHRVRRKKEMVKNPLDEIGGIGPSRKRALLQHFGTAKAVSRAALSDLMAVEGISEAVAKQVYNHFHEDAAK.

The GIY-YIG domain maps to 65–143; it reads NSPGVYRMLN…IKRLRPRFNV (79 aa). In terms of domain architecture, UVR spans 253–288; it reads QKVKSHMAEAMNQAAEDLDFERAAIYRDRLAALSHV.

It belongs to the UvrC family. In terms of assembly, interacts with UvrB in an incision complex.

Its subcellular location is the cytoplasm. In terms of biological role, the UvrABC repair system catalyzes the recognition and processing of DNA lesions. UvrC both incises the 5' and 3' sides of the lesion. The N-terminal half is responsible for the 3' incision and the C-terminal half is responsible for the 5' incision. The chain is UvrABC system protein C from Rhizobium etli (strain ATCC 51251 / DSM 11541 / JCM 21823 / NBRC 15573 / CFN 42).